The chain runs to 870 residues: Leucine--tRNA ligase (870 aa).

A 'HIGH' region motif is present at residues 43 to 53 (PYPSGRLHMGH). A 'KMSKS' region motif is present at residues 626–630 (KMSKS). K629 is a binding site for ATP.

It belongs to the class-I aminoacyl-tRNA synthetase family.

The protein localises to the cytoplasm. The catalysed reaction is tRNA(Leu) + L-leucine + ATP = L-leucyl-tRNA(Leu) + AMP + diphosphate. This is Leucine--tRNA ligase from Pseudoalteromonas atlantica (strain T6c / ATCC BAA-1087).